The primary structure comprises 82 residues: Zinc finger CCCH domain-containing protein 13 (82 aa).

2 C3H1-type zinc fingers span residues 9–37 (RPGE…HPKN) and 55–82 (RPGQ…DHFT).

In Arabidopsis thaliana (Mouse-ear cress), this protein is Zinc finger CCCH domain-containing protein 13.